The primary structure comprises 326 residues: MSIIIRVEDLRAVYLVREGTIKAADGISLDILENSVTAIVGESASGKSTIIEAMTKTLPPNGRILSGRVLYKGKDLLTMREEELRKIRWKEIALVPQAAQQSLNPTMKVIEHFKDTVEAHGVRWSHSELIEKASEKLRMVRLNPEAVLNSYPLQLSGGMKQRVLIALALLLDPVVLILDEPTSALDVLTQAHIIQLLKELKKMLKITLIFVTHDIAVAAELADKVAVIYGGNLVEYNSTFQIFKNPLHPYTRGLINSIMAVNADMSKVKPIPGDPPSLLNPPSGCRFHPRCEYAMEICKKEKPKWIRLDGEAHVACHLYEEGRPLK.

The ABC transporter domain occupies I5–I255. ATP-binding positions include A44–T49, N61, and Q97. [4Fe-4S] cluster contacts are provided by C285, C291, C298, and C316.

Belongs to the ABC transporter superfamily.

The protein resides in the cell membrane. The enzyme catalyses a dipeptide(out) + ATP + H2O = a dipeptide(in) + ADP + phosphate + H(+). The C-terminal iron-sulfur cluster may stabilize the structure of the C-terminal loops and may function in the regulation of the transport process. Part of the ABC transporter Dpp involved in dipeptide transport. Responsible for energy coupling to the transport system. The polypeptide is Dipeptide transport ATP-binding protein DppD (Caldanaerobacter subterraneus subsp. tengcongensis (strain DSM 15242 / JCM 11007 / NBRC 100824 / MB4) (Thermoanaerobacter tengcongensis)).